Consider the following 102-residue polypeptide: Putative pterin-4-alpha-carbinolamine dehydratase (102 aa).

This sequence belongs to the pterin-4-alpha-carbinolamine dehydratase family.

It carries out the reaction (4aS,6R)-4a-hydroxy-L-erythro-5,6,7,8-tetrahydrobiopterin = (6R)-L-erythro-6,7-dihydrobiopterin + H2O. The sequence is that of Putative pterin-4-alpha-carbinolamine dehydratase from Burkholderia orbicola (strain MC0-3).